The chain runs to 288 residues: MASLKEIDGRIKSTKKMKQITKAMNMVSSSKLRRAEKNTKQFEPYMEKMQDAITAIAGASKNSSHPMLRPRQVQRSGYLVITSDKGLAGAYSSNVLKRLINDIKEKHTSSDEYSIIVLGQSGVDFLKNRGYEIENSLVDVPDQPSFKSIQAIAKHAIDLFSEEHIDELKIYYSHYVSVLENKPTTKQVLPLSREDSSQGQGQMSSYEFEPDKESILSVILPQYVESLIYGTILDAKASEHAARMTAMKNASDNATELIDDLSLQYNRARQAEITQQITEIVGGSAALE.

It belongs to the ATPase gamma chain family. As to quaternary structure, F-type ATPases have 2 components, CF(1) - the catalytic core - and CF(0) - the membrane proton channel. CF(1) has five subunits: alpha(3), beta(3), gamma(1), delta(1), epsilon(1). CF(0) has three main subunits: a, b and c.

The protein localises to the cell membrane. Produces ATP from ADP in the presence of a proton gradient across the membrane. The gamma chain is believed to be important in regulating ATPase activity and the flow of protons through the CF(0) complex. The polypeptide is ATP synthase gamma chain (Staphylococcus haemolyticus (strain JCSC1435)).